The sequence spans 141 residues: MAARLCCHLDSARDVLLLRPFGPQSSGPSFPRPAAGSAASSASSPSPSDESDLPLGRLPACFASASGPCCLVFTCADLRTMDSTVNFVSWHANRQLGMPSKDLWTPYIKDQLLTKWEEGSIDPRLSIFVLGGCRHKCMRLL.

Positions 25 to 48 are enriched in low complexity; it reads SSGPSFPRPAAGSAASSASSPSPS. The segment at 25–52 is disordered; the sequence is SSGPSFPRPAAGSAASSASSPSPSDESD. The interval 68–113 is mitochondrial targeting sequence; sequence PCCLVFTCADLRTMDSTVNFVSWHANRQLGMPSKDLWTPYIKDQLL.

It belongs to the orthohepadnavirus protein X family. As to quaternary structure, may form homodimer. May interact with host CEBPA, CFLAR, CREB1, DDB1, E4F1, HBXIP, HSPD1/HSP60, NFKBIA, POLR2E and SMAD4. Interacts with host SMC5-SMC6 complex and induces its degradation. Interacts with host TRPC4AP; leading to prevent ubiquitination of TRPC4AP. Interacts with host PLSCR1; this interaction promotes ubiquitination and degradation of HBx and impairs HBx-mediated cell proliferation. A fraction may be phosphorylated in insect cells and HepG2 cells, a human hepatoblastoma cell line. Phosphorylated in vitro by host protein kinase C or mitogen-activated protein kinase. N-acetylated in insect cells.

It localises to the host cytoplasm. It is found in the host nucleus. The protein resides in the host mitochondrion. Its function is as follows. Multifunctional protein that plays a role in silencing host antiviral defenses and promoting viral transcription. Does not seem to be essential for HBV infection. May be directly involved in development of cirrhosis and liver cancer (hepatocellular carcinoma). Most of cytosolic activities involve modulation of cytosolic calcium. The effect on apoptosis is controversial depending on the cell types in which the studies have been conducted. May induce apoptosis by localizing in mitochondria and causing loss of mitochondrial membrane potential. May also modulate apoptosis by binding host CFLAR, a key regulator of the death-inducing signaling complex (DISC). Promotes viral transcription by using the host E3 ubiquitin ligase DDB1 to target the SMC5-SMC6 complex to proteasomal degradation. This host complex would otherwise bind to viral episomal DNA, and prevents its transcription. Moderately stimulates transcription of many different viral and cellular transcription elements. Promoters and enhancers stimulated by HBx contain DNA binding sites for NF-kappa-B, AP-1, AP-2, c-EBP, ATF/CREB, or the calcium-activated factor NF-AT. The chain is Protein X from Marmota monax (Woodchuck).